A 735-amino-acid chain; its full sequence is MDLGSDQLLPEDYFLAEEGALLEEMAEEDEEIDLYNEVTFGLDQESDEEPTKQEEDHKKPVQIPEAPKIEEPEKPQPIKETKKPEKSPLREVKIVVESDEEHVDRSIDSGGHTMNSTMDDSELGDPAVMRAFHGKPTLESLDSAVVDSGIGSTWSELDTDYDQSGMDSGLWEASPKVSMSATGQILEDKAILRVMERAPYLPPANLEFLGSPLQRGFMPSQRLQRPEMGVMSPKPYRPRFMRQQSPLVPRSMRPPFPFTPPRRGPPIFTPNQSPGFVSQTPFRPMSPNVSTPTRPMTPKMVRMHFGPMSPSPSFSPFFSPMGNALQRFKVPGHVTQLHPQHRRILSQRQRPQSSSRKQWESRPDPYASLMSQKEKEWVIKLQMIQLQSENPHLDDYYYQAYYEKLERKLAEEELLGERKKREPTKLVTPYIQKAEMYESVVHIEGSLGQVAVSTCYSPRRAIDAVSYAMPDEAIKALGYQRLRVLKHTEKVFLLLLEVEELARKMSHIPEEEHAHFQHKQNYKVQRIYDILNMAPCHSEDESENEFLQLLQVGKGKKLIARLLPFLTRVQAGKILLLVVQHLPFLIKNDSAEESLSVLYGPLKNIINGLSFTELIGVIQELTRPLPESSDLPLTLAFQNQFGISLLYCLLSHGERLLSSDMPMEPCIGDFEKWTDTVFLVAKELSHVSKSSMVEPLFLPSNLLSLFCRYLDKQTIHKLEDKMECPAIPPYTAVPS.

2 disordered regions span residues 39-93 (TFGL…REVK) and 336-366 (QLHP…PDPY). 2 stretches are compositionally biased toward basic and acidic residues: residues 49–59 (EPTKQEEDHKK) and 67–93 (PKIE…REVK). The span at 346–356 (SQRQRPQSSSR) shows a compositional bias: low complexity.

The protein belongs to the PAT1 family. In terms of assembly, interacts with ribonucleoprotein complex components. Interacts with cpeb.

It localises to the cytoplasm. The protein resides in the nucleus. Its function is as follows. RNA-binding protein that acts as a translational repressor. This Xenopus tropicalis (Western clawed frog) protein is Protein PAT1 homolog 2 (patl2).